The following is a 538-amino-acid chain: Glutamyl-tRNA(Gln) amidotransferase subunit B, mitochondrial (538 aa).

This sequence belongs to the GatB/GatE family. GatB subfamily. Subunit of the heterotrimeric GatCAB amidotransferase (AdT) complex, composed of A, B and C subunits.

Its subcellular location is the mitochondrion. It carries out the reaction L-glutamyl-tRNA(Gln) + L-glutamine + ATP + H2O = L-glutaminyl-tRNA(Gln) + L-glutamate + ADP + phosphate + H(+). Its function is as follows. Allows the formation of correctly charged Gln-tRNA(Gln) through the transamidation of misacylated Glu-tRNA(Gln) in the mitochondria. The reaction takes place in the presence of glutamine and ATP through an activated gamma-phospho-Glu-tRNA(Gln). This is Glutamyl-tRNA(Gln) amidotransferase subunit B, mitochondrial from Dictyostelium discoideum (Social amoeba).